Consider the following 398-residue polypeptide: Aspartate aminotransferase (398 aa).

Residues Gly-36, Trp-132, and Asn-185 each coordinate L-aspartate. Residue Lys-248 is modified to N6-(pyridoxal phosphate)lysine. L-aspartate is bound at residue Arg-376.

The protein belongs to the class-I pyridoxal-phosphate-dependent aminotransferase family. In terms of assembly, homodimer. Pyridoxal 5'-phosphate serves as cofactor.

It is found in the cytoplasm. The enzyme catalyses L-aspartate + 2-oxoglutarate = oxaloacetate + L-glutamate. In Pseudomonas aeruginosa (strain ATCC 15692 / DSM 22644 / CIP 104116 / JCM 14847 / LMG 12228 / 1C / PRS 101 / PAO1), this protein is Aspartate aminotransferase (aspC).